Here is a 306-residue protein sequence, read N- to C-terminus: Pantothenate kinase (306 aa).

91–98 (GSVAVGKS) lines the ATP pocket.

The protein belongs to the prokaryotic pantothenate kinase family.

It localises to the cytoplasm. The enzyme catalyses (R)-pantothenate + ATP = (R)-4'-phosphopantothenate + ADP + H(+). Its pathway is cofactor biosynthesis; coenzyme A biosynthesis; CoA from (R)-pantothenate: step 1/5. This is Pantothenate kinase from Streptococcus suis (strain 98HAH33).